The sequence spans 206 residues: Small ribosomal subunit protein uS4 (206 aa).

Residues 98–161 (RRLDNVVYRL…RSMELIKNNL (64 aa)) form the S4 RNA-binding domain.

This sequence belongs to the universal ribosomal protein uS4 family. As to quaternary structure, part of the 30S ribosomal subunit. Contacts protein S5. The interaction surface between S4 and S5 is involved in control of translational fidelity.

One of the primary rRNA binding proteins, it binds directly to 16S rRNA where it nucleates assembly of the body of the 30S subunit. Functionally, with S5 and S12 plays an important role in translational accuracy. This Caldanaerobacter subterraneus subsp. tengcongensis (strain DSM 15242 / JCM 11007 / NBRC 100824 / MB4) (Thermoanaerobacter tengcongensis) protein is Small ribosomal subunit protein uS4.